The following is a 663-amino-acid chain: Beta-galactosidase YesZ (663 aa).

Arg106 is a binding site for substrate. Cys110 serves as a coordination point for Zn(2+). Asn144 contacts substrate. Glu145 acts as the Proton donor in catalysis. Positions 153, 155, and 158 each coordinate Zn(2+). Residue Glu296 is the Nucleophile of the active site. 345–348 provides a ligand contact to substrate; sequence EISH.

Belongs to the glycosyl hydrolase 42 family. As to quaternary structure, homotrimer.

The catalysed reaction is Hydrolysis of terminal non-reducing beta-D-galactose residues in beta-D-galactosides.. Its function is as follows. May play a role in the degradation of rhamnogalacturonan derived from plant cell walls. In Bacillus subtilis (strain 168), this protein is Beta-galactosidase YesZ (yesZ).